The primary structure comprises 93 residues: Conidiation-specific protein 6 (93 aa).

The disordered stretch occupies residues 1–93 (MSDFENKNPN…HAKKKLDGLE (93 aa)). 2 tandem repeats follow at residues 7 to 37 (KNPNNVLGGHKATLHNPNVSEEAKEHSKKVL) and 59 to 89 (KNPGNVAGGYKATLNNPKVSDEAKEHAKKKL). Residues 7–89 (KNPNNVLGGH…EAKEHAKKKL (83 aa)) are 2 X 30 AA approximate repeats. 2 stretches are compositionally biased toward basic and acidic residues: residues 27 to 37 (EEAKEHSKKVL) and 77 to 93 (VSDEAKEHAKKKLDGLE).

It belongs to the UPF0654 (con-6) family.

Its function is as follows. May protect dormant spores from desiccation and play a significant role in the formation or survival of microconidia and ascospores. The polypeptide is Conidiation-specific protein 6 (con-6) (Neurospora crassa (strain ATCC 24698 / 74-OR23-1A / CBS 708.71 / DSM 1257 / FGSC 987)).